The sequence spans 197 residues: Crossover junction endodeoxyribonuclease RuvC (197 aa).

Active-site residues include D7, E68, and D141. Positions 7, 68, and 141 each coordinate Mg(2+). Low complexity-rich tracts occupy residues 165 to 181 (AAPA…TPAR) and 188 to 197 (APARRPAGAS). The interval 165-197 (AAPAAPVSRPAPATPARRSPRPAAPARRPAGAS) is disordered.

This sequence belongs to the RuvC family. As to quaternary structure, homodimer which binds Holliday junction (HJ) DNA. The HJ becomes 2-fold symmetrical on binding to RuvC with unstacked arms; it has a different conformation from HJ DNA in complex with RuvA. In the full resolvosome a probable DNA-RuvA(4)-RuvB(12)-RuvC(2) complex forms which resolves the HJ. Requires Mg(2+) as cofactor.

The protein localises to the cytoplasm. It catalyses the reaction Endonucleolytic cleavage at a junction such as a reciprocal single-stranded crossover between two homologous DNA duplexes (Holliday junction).. Functionally, the RuvA-RuvB-RuvC complex processes Holliday junction (HJ) DNA during genetic recombination and DNA repair. Endonuclease that resolves HJ intermediates. Cleaves cruciform DNA by making single-stranded nicks across the HJ at symmetrical positions within the homologous arms, yielding a 5'-phosphate and a 3'-hydroxyl group; requires a central core of homology in the junction. The consensus cleavage sequence is 5'-(A/T)TT(C/G)-3'. Cleavage occurs on the 3'-side of the TT dinucleotide at the point of strand exchange. HJ branch migration catalyzed by RuvA-RuvB allows RuvC to scan DNA until it finds its consensus sequence, where it cleaves and resolves the cruciform DNA. The chain is Crossover junction endodeoxyribonuclease RuvC from Frankia alni (strain DSM 45986 / CECT 9034 / ACN14a).